We begin with the raw amino-acid sequence, 489 residues long: Tripartite motif-containing protein 10 (489 aa).

The RING-type zinc finger occupies 16–61 (CPVCQGTLREPVTIDCGHNFCRVCLTRYLEITSPDPEEPPTCPLCK). The B box-type zinc finger occupies 94 to 135 (DEEDVCPEHGEKVYFFCEDDEMQLCVVCREAWEHRAHTVRFL). The Zn(2+) site is built by Cys99, His102, Cys121, and His127. Positions 142 to 245 (YREQIQKCLE…IEELEEKKER (104 aa)) form a coiled coil. The 195-residue stretch at 292-486 (REMKMFLEKL…FSLSSQEGAA (195 aa)) folds into the B30.2/SPRY domain.

Belongs to the TRIM/RBCC family. Interacts with IFNAR1; this interaction prevents association of IFNAR1 with TYK2.

It is found in the cytoplasm. Functionally, E3 ligase that plays an essential role in the differentiation and survival of terminal erythroid cells. May directly bind to PTEN and promote its ubiquitination, resulting in its proteasomal degradation and activation of hypertrophic signaling. In addition, plays a role in immune response regulation by repressing the phosphorylation of STAT1 and STAT2 in the interferon/JAK/STAT signaling pathway independent of its E3 ligase activity. Mechanistically, interacts with the intracellular domain of IFNAR1 and thereby inhibits the association between TYK2 and IFNAR1. This chain is Tripartite motif-containing protein 10 (TRIM10), found in Bos taurus (Bovine).